Consider the following 878-residue polypeptide: MVDMYASLRSNVGTLGQILGDTIRTDLDDTFLDKIEQIRHLAKSSRQGDSAARKEMLTLLSSLSDDELVPFAKAFNQFLNLANIAEQFHTISRNCDELVCVPDPVEQLLGRMLGGNIDQEKVLACLKTLDIDLVLTAHPTEISRRTLIQKYSAVIDSLTAQENTQLTEQEKKQHHLRLRQLIAQIWHTNEIRNERPTPVDEARWGLCTIEASLWQAVPDFLRQLNQQVEERTNTQLPTDIAPVRFSSWMGGDRDGNPFVTSAVTQEVLDRNRHTAARLYLKDVVLLVNELSMEGANEALLAYTNNSNEPYRDVLRTLRQKLRNTIDYLNGRLEGQHPDVDPSEIIWHESDLKDPLMMLYQSLCDRGMSLIANGLLLDMLRRIACFGIHMLRLDVRQDADRHADVIAELTRYLGMGDYAHWDETEKQSFLLRELSSKRPLIPANWQASPEVEEVVKTCRLVATQPARAMGSYVISMASQPSDVLAVLLLLKETGCPHPMRVVPLFETLDDLNNASACMSALFSIDWYRGYTKGIQEVMIGYSDSAKDAGVMAAAWAQYTAQEKLVAISQEANIKLTLFHGRGGTIGRGGGPAHEAILSQPPGSVDGRIRVTEQGEMIRFKFGLPKLAVQSLALYTSAVMEATLLPPPEPKPEWRQCMQQLAEESVLAYRAIVREEPDFVSYFRAATPEIELGKLPLGSRPAKRRVDGGIESLRAIPWIFAWSQNRLMLPAWLGAGEALKAASERGDLPLLQEMEKHWPFFKTRISMLEMVYAKAEPNLSKFYETSLVPKELHHLGVQLRERLAIGIEAVLELTQAESLMAHTPWNRESVELRNPYIDPLNFLQAELLARTRREEQSSKNVELALMLTIAGVAAGMRNTG.

Residues H138 and K545 contribute to the active site.

This sequence belongs to the PEPCase type 1 family. Requires Mg(2+) as cofactor.

The catalysed reaction is oxaloacetate + phosphate = phosphoenolpyruvate + hydrogencarbonate. Functionally, forms oxaloacetate, a four-carbon dicarboxylic acid source for the tricarboxylic acid cycle. This chain is Phosphoenolpyruvate carboxylase, found in Shewanella halifaxensis (strain HAW-EB4).